The chain runs to 741 residues: MSNIIVEHQYSHRLKLTVVRAENVTKGAFGDLLDTPDPYVELSVPTTPESRKRTRHINNDINPKWNETFEFILDPNQSNVLEVTLMDANYVMDETLGTAKYSLSKLKVAQMEHVTLSIGKTTKVFLDLLLEVCASTDLRFSMTLCDQEKLFMQTRRDRVMLSIKKLLKMENPRFLPSSPREVPTIAILGSGGGFRAMVGFSGVMKALYESGVFDCATYVAGLSGSTWYMSMLYSHPEFPAKGPGDINKELMNRVSNNPLKLLLPQNINRYVKALWKKKSAGQPVTFTDIFGMLIGETLIPGRMNIKLSSLKGKINEGQSPLPLFTCLHVKPDVSELMFADWVEFSPYEIGMAKYGTFMSPGLFGSKFFMGSVVKQYEENPLHFLMGVWGSAFSILFNRVLGVKETTSSSTMEEELEQIKPEHIVGDDSADNEEETQRGGTESADAEDERQRHAQASWVQRMLTSIMGDTTLFTTREGRAGKVHNFMLGLNLNSTLPFSPFSGITHQTSLEEEVDAVTDPDEFERIYEPLDVKSKKIHVVDSGLTFNLPYPLILRCQRGVDLIISFDFSARPSDSSPPFKELLLAEKWARMNKLPFPKIDSKVFDREGLKECYVFKPAKGDKNCPTIIHFVLANINFRNFKAPGVPRDSDKDIEFGDFDIFDEPASPYSTFNFKYNNQAFKRLHDLMEFNTLNNIEVIKEAIKDSILLRRENPARCSVSLSLSEIENKKFLKRDNSIAKRPT.

The C2 domain occupies 1 to 116 (MSNIIVEHQY…KVAQMEHVTL (116 aa)). Residues 1–172 (MSNIIVEHQY…IKKLLKMENP (172 aa)) are phospholipid binding. Ca(2+) is bound by residues D34, T35, D37, N59, D87, A88, and N89. One can recognise a PLA2c domain in the interval 132 to 729 (VCASTDLRFS…SLSEIENKKF (598 aa)). The active-site Nucleophile is S223. A disordered region spans residues 406 to 453 (TSSSTMEEELEQIKPEHIVGDDSADNEEETQRGGTESADAEDERQRHA). The segment covering 416–425 (EQIKPEHIVG) has biased composition (basic and acidic residues). Phosphoserine; by MAPK is present on S498. D540 (proton acceptor) is an active-site residue.

Post-translationally, activated by phosphorylation on a serine residue.

The protein resides in the cytoplasm. It is found in the cytoplasmic vesicle. It catalyses the reaction a 1,2-diacyl-sn-glycero-3-phosphocholine + H2O = a 1-acyl-sn-glycero-3-phosphocholine + a fatty acid + H(+). The enzyme catalyses a 1-acyl-sn-glycero-3-phosphocholine + H2O = sn-glycerol 3-phosphocholine + a fatty acid + H(+). With respect to regulation, stimulated by agonists such as ATP, EGF, thrombin and bradykinin as well as by cytosolic Ca(2+). In terms of biological role, selectively hydrolyzes arachidonyl phospholipids in the sn-2 position releasing arachidonic acid. Together with its lysophospholipid activity, it is implicated in the initiation of the inflammatory response. The protein is Cytosolic phospholipase A2 (pla2g4a) of Danio rerio (Zebrafish).